The sequence spans 462 residues: Fasciclin-like arabinogalactan protein 18 (462 aa).

The N-terminal stretch at 1-25 (MDRCIYGCSVITIFFSFFFLLNASA) is a signal peptide. N-linked (GlcNAc...) asparagine glycans are attached at residues N32, N77, and N293. 2 consecutive FAS1 domains span residues 40–185 (NSNS…ERLL) and 271–414 (VKDF…DGVL).

Belongs to the fasciclin-like AGP family.

It is found in the secreted. May be a cell surface adhesion protein. This is Fasciclin-like arabinogalactan protein 18 (FLA18) from Arabidopsis thaliana (Mouse-ear cress).